A 211-amino-acid polypeptide reads, in one-letter code: MRDPVDTYMNYLIPMVVEQTNRGERSYDIFSRLLKERIIFLTGPVEDGMSTLAVAQLLFLEADNPKKEISMYINSPGGVVTSGLAIYDTMQFIKPAVSTLCIGQAASMGSLLLTAGEKDMRFALPNARIMVHQPSGGFQGQVTDIMLHAQEILNLKRRLNEIYVKHTGRSMDKIEDALERDNFMTAKAALDFGLIDAVIDQRPTDDTSKAA.

Serine 107 serves as the catalytic Nucleophile. Histidine 132 is an active-site residue.

It belongs to the peptidase S14 family. Fourteen ClpP subunits assemble into 2 heptameric rings which stack back to back to give a disk-like structure with a central cavity, resembling the structure of eukaryotic proteasomes.

It is found in the cytoplasm. It carries out the reaction Hydrolysis of proteins to small peptides in the presence of ATP and magnesium. alpha-casein is the usual test substrate. In the absence of ATP, only oligopeptides shorter than five residues are hydrolyzed (such as succinyl-Leu-Tyr-|-NHMec, and Leu-Tyr-Leu-|-Tyr-Trp, in which cleavage of the -Tyr-|-Leu- and -Tyr-|-Trp bonds also occurs).. Functionally, cleaves peptides in various proteins in a process that requires ATP hydrolysis. Has a chymotrypsin-like activity. Plays a major role in the degradation of misfolded proteins. This is ATP-dependent Clp protease proteolytic subunit from Xanthobacter autotrophicus (strain ATCC BAA-1158 / Py2).